A 146-amino-acid polypeptide reads, in one-letter code: Large ribosomal subunit protein uL11 (146 aa).

Belongs to the universal ribosomal protein uL11 family. In terms of assembly, part of the ribosomal stalk of the 50S ribosomal subunit. Interacts with L10 and the large rRNA to form the base of the stalk. L10 forms an elongated spine to which L12 dimers bind in a sequential fashion forming a multimeric L10(L12)X complex. In terms of processing, one or more lysine residues are methylated.

Forms part of the ribosomal stalk which helps the ribosome interact with GTP-bound translation factors. This Wolbachia pipientis wMel protein is Large ribosomal subunit protein uL11.